A 517-amino-acid chain; its full sequence is Ribonuclease Y (517 aa).

The chain crosses the membrane as a helical span at residues 1–21 (MIEVLIGLGAGVAGVGAGYLY). The 67-residue stretch at 207 to 273 (LINVVNIKND…TRVIELLVED (67 aa)) folds into the KH domain. The region spanning 333–426 (ALAHSLEVAH…VCAADCLSAA (94 aa)) is the HD domain.

It belongs to the RNase Y family.

The protein resides in the cell membrane. Endoribonuclease that initiates mRNA decay. The sequence is that of Ribonuclease Y from Campylobacter curvus (strain 525.92).